The sequence spans 314 residues: Malate dehydrogenase (314 aa).

Residues 13 to 18 (GGGQIG) and D37 each bind NAD(+). 2 residues coordinate substrate: R88 and R94. NAD(+)-binding positions include N101 and 124 to 126 (VAN). N126 and R157 together coordinate substrate. The Proton acceptor role is filled by H181.

The protein belongs to the LDH/MDH superfamily. MDH type 3 family.

The enzyme catalyses (S)-malate + NAD(+) = oxaloacetate + NADH + H(+). Catalyzes the reversible oxidation of malate to oxaloacetate. This is Malate dehydrogenase from Myxococcus xanthus.